We begin with the raw amino-acid sequence, 1221 residues long: RNA exonuclease 1 homolog (1221 aa).

Gly residues predominate over residues 37 to 46 (RGSGAPGDGG). Residues 37–75 (RGSGAPGDGGEAPPAAGLGYDPYNPELPKPPAQRENGTL) form a disordered region. A coiled-coil region spans residues 86-115 (LELELVNQAIEAVRSEVELEQRRYRELLET). A disordered region spans residues 116–598 (TREHRSAEAP…STSSAGADVD (483 aa)). Residue R191 is modified to Omega-N-methylarginine. Phosphoserine is present on residues S287, S289, and S358. Low complexity predominate over residues 357–369 (ASPAQVQSSQDGG). The segment covering 393-417 (AQGKDKTKDKGRGRPVEKPRADKKG) has biased composition (basic and acidic residues). Phosphoserine occurs at positions 459, 499, and 526. Over residues 492-501 (LVERKARSLD) the composition is skewed to basic and acidic residues. Residues 498–577 (RSLDEGASQD…KRLKASPPPS (80 aa)) form an interaction with ELOA region. Residues 580-593 (PSSSSSSSSSTSSA) are compositionally biased toward low complexity. S610 carries the post-translational modification Phosphoserine. Disordered stretches follow at residues 619–692 (IFNE…TAQE) and 735–775 (HIPN…TRTL). A compositionally biased stretch (basic and acidic residues) spans 627-648 (KTEDRGRLARQPPKEEKSEEKG). S914 is subject to Phosphoserine. The Exonuclease domain maps to 1060-1209 (IYALDCEMSY…EDAGACMHLV (150 aa)).

It belongs to the REXO1/REXO3 family. Interacts with TCEA2 and ELOA. As to expression, ubiquitously expressed.

The protein localises to the nucleus. Functionally, seems to have no detectable effect on transcription elongation in vitro. This is RNA exonuclease 1 homolog (REXO1) from Homo sapiens (Human).